A 229-amino-acid chain; its full sequence is Potassium/proton antiporter CemA (229 aa).

Transmembrane regions (helical) follow at residues Ala-6–Cys-26, Ile-107–Gly-127, Phe-152–Leu-172, and Ile-189–Ile-209.

It belongs to the CemA family.

It localises to the plastid. Its subcellular location is the chloroplast inner membrane. It carries out the reaction K(+)(in) + H(+)(out) = K(+)(out) + H(+)(in). In terms of biological role, contributes to K(+)/H(+) antiport activity by supporting proton efflux to control proton extrusion and homeostasis in chloroplasts in a light-dependent manner to modulate photosynthesis. Prevents excessive induction of non-photochemical quenching (NPQ) under continuous-light conditions. Indirectly promotes efficient inorganic carbon uptake into chloroplasts. The protein is Potassium/proton antiporter CemA of Aethionema grandiflorum (Persian stone-cress).